The primary structure comprises 863 residues: Eukaryotic translation initiation factor 3 subunit C (863 aa).

The disordered stretch occupies residues 1–92 (MSRFFRGGDD…VKSAKDKRFD (92 aa)). Over residues 16–53 (SSDEEELYSTSEEEEEEDQDQEESSEEEDEEESSDEDE) the composition is skewed to acidic residues. Basic and acidic residues predominate over residues 79-92 (GATKVKSAKDKRFD). Residues 604–778 (FHMHINLELL…KTVIFRKGVE (175 aa)) form the PCI domain. Residues 808-863 (TQGSANAFSRKDGRQGGQRGGGQRSGRGGARAGGNAQRQAGGTQFTGGALGAAVRG) are disordered. Positions 822–839 (QGGQRGGGQRSGRGGARA) are enriched in gly residues. The span at 840 to 850 (GGNAQRQAGGT) shows a compositional bias: low complexity.

This sequence belongs to the eIF-3 subunit C family. Component of the eukaryotic translation initiation factor 3 (eIF-3) complex.

It is found in the cytoplasm. Its function is as follows. Component of the eukaryotic translation initiation factor 3 (eIF-3) complex, which is involved in protein synthesis of a specialized repertoire of mRNAs and, together with other initiation factors, stimulates binding of mRNA and methionyl-tRNAi to the 40S ribosome. The eIF-3 complex specifically targets and initiates translation of a subset of mRNAs involved in cell proliferation. This is Eukaryotic translation initiation factor 3 subunit C from Chaetomium globosum (strain ATCC 6205 / CBS 148.51 / DSM 1962 / NBRC 6347 / NRRL 1970) (Soil fungus).